Consider the following 558-residue polypeptide: Vanin-like protein 1 (558 aa).

Residues 1–22 (MSNTWWWLSVVLLILGLMPGMS) form the signal peptide. In terms of domain architecture, CN hydrolase spans 33–299 (YTAGVVEFKQ…RAIYVAQVPK (267 aa)). N-linked (GlcNAc...) asparagine glycosylation is present at Asn-65. The active-site Proton acceptor is the Glu-76. N-linked (GlcNAc...) asparagine glycans are attached at residues Asn-103, Asn-120, and Asn-128. Catalysis depends on Lys-171, which acts as the Proton donor. Residue Asn-180 is glycosylated (N-linked (GlcNAc...) asparagine). Cys-203 serves as the catalytic Nucleophile. Asn-354 and Asn-379 each carry an N-linked (GlcNAc...) asparagine glycan. Ser-531 carries GPI-anchor amidated serine lipidation. The propeptide at 532 to 558 (GSPGLRILGGWLAMPLIILAIARTMSS) is removed in mature form.

Belongs to the carbon-nitrogen hydrolase superfamily. BTD/VNN family. In terms of tissue distribution, expressed in larvae and early pupae. Expressed in third instar larvae.

It is found in the cell membrane. This is Vanin-like protein 1 from Drosophila melanogaster (Fruit fly).